The primary structure comprises 520 residues: Sodium-dependent dicarboxylate transporter SdcS (520 aa).

14 consecutive transmembrane segments (helical) span residues 30 to 50 (TGQL…LLFF), 55 to 75 (LPWK…WWIT), 77 to 97 (AIPI…GHIL), 104 to 124 (SEYG…AIAM), 160 to 180 (SMFV…LAII), 207 to 227 (IGYA…PLII), 242 to 262 (FAKW…ITWL), 298 to 318 (KVVQ…EFLL), 323 to 343 (VTSS…LFII), 362 to 382 (ELPW…KGIS), 399 to 419 (GVSP…LTEV), 428 to 448 (MILP…LLLM), 452 to 472 (AMAA…AIIF), and 491 to 511 (LISA…VLGI).

The protein belongs to the SLC13A/DASS transporter (TC 2.A.47) family. NADC subfamily.

It localises to the cell membrane. In terms of biological role, mediates the transport of the dicarboxylates fumarate, malate, and succinate across the cytoplasmic membrane via a Na(+)-electrochemical gradient. The protein is Sodium-dependent dicarboxylate transporter SdcS (sdcS) of Staphylococcus aureus (strain MRSA252).